An 81-amino-acid polypeptide reads, in one-letter code: Sec-independent protein translocase protein TatA (81 aa).

A helical transmembrane segment spans residues 1–21; it reads MGGLQPWHWVIVIAVFVLLFG. A compositionally biased stretch (basic and acidic residues) spans 46-56; that stretch reads MQAESKGDEPK. Residues 46-81 are disordered; sequence MQAESKGDEPKPATPIASERVDTTAPEQQSTDRHTA.

This sequence belongs to the TatA/E family. In terms of assembly, the Tat system comprises two distinct complexes: a TatABC complex, containing multiple copies of TatA, TatB and TatC subunits, and a separate TatA complex, containing only TatA subunits. Substrates initially bind to the TatABC complex, which probably triggers association of the separate TatA complex to form the active translocon.

It is found in the cell membrane. In terms of biological role, part of the twin-arginine translocation (Tat) system that transports large folded proteins containing a characteristic twin-arginine motif in their signal peptide across membranes. TatA could form the protein-conducting channel of the Tat system. This Mycolicibacterium smegmatis (strain ATCC 700084 / mc(2)155) (Mycobacterium smegmatis) protein is Sec-independent protein translocase protein TatA.